We begin with the raw amino-acid sequence, 452 residues long: Pup--protein ligase (452 aa).

A Mg(2+)-binding site is contributed by E9. R53 is a binding site for ATP. Residue Y55 participates in Mg(2+) binding. The Proton acceptor role is filled by D57. E63 is a Mg(2+) binding site. T66 and W419 together coordinate ATP.

The protein belongs to the Pup ligase/Pup deamidase family. Pup-conjugating enzyme subfamily.

It catalyses the reaction ATP + [prokaryotic ubiquitin-like protein]-L-glutamate + [protein]-L-lysine = ADP + phosphate + N(6)-([prokaryotic ubiquitin-like protein]-gamma-L-glutamyl)-[protein]-L-lysine.. The protein operates within protein degradation; proteasomal Pup-dependent pathway. It participates in protein modification; protein pupylation. In terms of biological role, catalyzes the covalent attachment of the prokaryotic ubiquitin-like protein modifier Pup to the proteasomal substrate proteins, thereby targeting them for proteasomal degradation. This tagging system is termed pupylation. The ligation reaction involves the side-chain carboxylate of the C-terminal glutamate of Pup and the side-chain amino group of a substrate lysine. The polypeptide is Pup--protein ligase (Saccharomonospora viridis (strain ATCC 15386 / DSM 43017 / JCM 3036 / CCUG 5913 / NBRC 12207 / NCIMB 9602 / P101) (Thermoactinomyces viridis)).